The primary structure comprises 465 residues: MIQLYNSMTGKKEPFKPLEEGKVKMYVCGPTVYNYIHIGNARPAIVFDTVRRYFTYRGYDVKYVSNFTDVDDKIIRTANELGEDYHALTKRFIEAYHADTGALNVQKADIHPLVTETMDDIIAFIEVLVKKGNAYASSGDVYFRTRSFKDYGQLSQQSIDELRSGARIEVGEKKEDPLDFVLWKAAKPGEPAWTSPWGEGRPGWHIECSAMAKKYLGDTIDIHAGGQDLKFPHHENEIAQSEACNSQKFANYWMHNGFLNIENEKMSKSLGNFLTVHEAIQAVDPMVLRFFMLSVQYRHPINYSRDLIDQAANGLARIRESVANVEHRLTMTADLGTATEKWLNRIEEIKQHFVTSMDDDFNTANAVTDLFDLSKEANLYLGEDQVAKEVLERFLAVFQELSTVLGVTLTIEKGLLDEEVEQLIRDRDTARKERDFARADAIRDQLRDQGILLEDTAQGMRWKRG.

Residue C28 participates in Zn(2+) binding. A 'HIGH' region motif is present at residues P30–N40. 3 residues coordinate Zn(2+): C208, H233, and E237. A 'KMSKS' region motif is present at residues K265–S269. An ATP-binding site is contributed by K268.

Belongs to the class-I aminoacyl-tRNA synthetase family. In terms of assembly, monomer. Zn(2+) is required as a cofactor.

It localises to the cytoplasm. It catalyses the reaction tRNA(Cys) + L-cysteine + ATP = L-cysteinyl-tRNA(Cys) + AMP + diphosphate. This is Cysteine--tRNA ligase from Exiguobacterium sibiricum (strain DSM 17290 / CCUG 55495 / CIP 109462 / JCM 13490 / 255-15).